The sequence spans 509 residues: Kelch repeat protein M-T9 (509 aa).

The BTB domain occupies 15-79 (SDVTVVAGDS…MYAGCDGLND (65 aa)). 5 Kelch repeats span residues 274–320 (VLYC…IVNG), 321–368 (YIYV…YRNE), 370–415 (WIVG…VYNN), 416–463 (RLYC…VYNK), and 465–509 (IYVL…NDEI).

The protein belongs to the poxviruses Kelch family.

This chain is Kelch repeat protein M-T9, found in Myxoma virus (strain Lausanne) (MYXV).